Reading from the N-terminus, the 311-residue chain is Aspartate carbamoyltransferase catalytic subunit (311 aa).

Carbamoyl phosphate-binding residues include Arg58 and Thr59. Lys86 provides a ligand contact to L-aspartate. Residues Arg108, His136, and Gln139 each contribute to the carbamoyl phosphate site. L-aspartate contacts are provided by Arg169 and Arg224. Carbamoyl phosphate contacts are provided by Gly265 and Pro266.

This sequence belongs to the aspartate/ornithine carbamoyltransferase superfamily. ATCase family. In terms of assembly, heterododecamer (2C3:3R2) of six catalytic PyrB chains organized as two trimers (C3), and six regulatory PyrI chains organized as three dimers (R2).

It catalyses the reaction carbamoyl phosphate + L-aspartate = N-carbamoyl-L-aspartate + phosphate + H(+). It participates in pyrimidine metabolism; UMP biosynthesis via de novo pathway; (S)-dihydroorotate from bicarbonate: step 2/3. Functionally, catalyzes the condensation of carbamoyl phosphate and aspartate to form carbamoyl aspartate and inorganic phosphate, the committed step in the de novo pyrimidine nucleotide biosynthesis pathway. The sequence is that of Aspartate carbamoyltransferase catalytic subunit from Geobacter sulfurreducens (strain ATCC 51573 / DSM 12127 / PCA).